The chain runs to 87 residues: MVKNSVISVISQEEKKGSVEFQVFNFTNKIRRLTSHLELHKKDYLSQRGLKKILGKRQRLLAYLAKKNRVRYKELINRLDIRETKTR.

It belongs to the universal ribosomal protein uS15 family. Part of the 30S ribosomal subunit.

Its subcellular location is the plastid. It localises to the chloroplast. The sequence is that of Small ribosomal subunit protein uS15c (rps15) from Solanum lycopersicum (Tomato).